The primary structure comprises 346 residues: tRNA N6-adenosine threonylcarbamoyltransferase (346 aa).

Positions 120, 124, and 141 each coordinate a divalent metal cation. Substrate-binding positions include Y141–G145, D173, G188, E192, and N277. D305 serves as a coordination point for a divalent metal cation.

Belongs to the KAE1 / TsaD family. In terms of assembly, component of the EKC/KEOPS complex composed of at least BUD32, CGI121, GON7, KAE1 and PCC1; the whole complex dimerizes. A divalent metal cation is required as a cofactor.

It localises to the cytoplasm. It is found in the nucleus. The catalysed reaction is L-threonylcarbamoyladenylate + adenosine(37) in tRNA = N(6)-L-threonylcarbamoyladenosine(37) in tRNA + AMP + H(+). In terms of biological role, component of the EKC/KEOPS complex that is required for the formation of a threonylcarbamoyl group on adenosine at position 37 (t(6)A37) in tRNAs that read codons beginning with adenine. The complex is probably involved in the transfer of the threonylcarbamoyl moiety of threonylcarbamoyl-AMP (TC-AMP) to the N6 group of A37. KAE1 likely plays a direct catalytic role in this reaction, but requires other protein(s) of the complex to fulfill this activity. The EKC/KEOPS complex also promotes both telomere uncapping and telomere elongation. The complex is required for efficient recruitment of transcriptional coactivators. The protein is tRNA N6-adenosine threonylcarbamoyltransferase of Gibberella zeae (strain ATCC MYA-4620 / CBS 123657 / FGSC 9075 / NRRL 31084 / PH-1) (Wheat head blight fungus).